The following is a 589-amino-acid chain: Phenylalanine--tRNA ligase beta subunit (589 aa).

The B5 domain maps to 302–379 (LAYRKEMVRA…IAYGYSNIQM (78 aa)). Mg(2+)-binding residues include Asp-357, Asp-363, Glu-366, and Asp-367.

The protein belongs to the phenylalanyl-tRNA synthetase beta subunit family. Type 2 subfamily. In terms of assembly, heterotetramer; dimer of two heterodimers formed by FARSA and FARSB. It depends on Mg(2+) as a cofactor.

The protein resides in the cytoplasm. The catalysed reaction is tRNA(Phe) + L-phenylalanine + ATP = L-phenylalanyl-tRNA(Phe) + AMP + diphosphate + H(+). The protein is Phenylalanine--tRNA ligase beta subunit (FARSB) of Pongo abelii (Sumatran orangutan).